Reading from the N-terminus, the 495-residue chain is Beta-galactoside alpha-2,6-sialyltransferase 2 (495 aa).

Residues 1–10 (MKPHLKQWRQ) lie on the Cytoplasmic side of the membrane. The chain crosses the membrane as a helical; Signal-anchor for type II membrane protein span at residues 11 to 31 (GMLCGVFAWGLFFVVIFLYFT). Residues 32-495 (DSSPAKPAPS…LQAVRCPPGA (464 aa)) lie on the Lumenal side of the membrane. Disordered regions lie at residues 63 to 90 (GASEGLPEGADLRRGSPRGLPSGPLRTW) and 107 to 165 (GRTS…EDGE). Residues 134 to 143 (PEGARPPRAA) are compositionally biased toward low complexity. Residues 144 to 153 (PGRRAKRGPR) show a composition bias toward basic residues. Intrachain disulfides connect cysteine 225–cysteine 491, cysteine 268–cysteine 420, and cysteine 438–cysteine 449. Residues asparagine 279 and asparagine 309 are each glycosylated (N-linked (GlcNAc...) asparagine).

It belongs to the glycosyltransferase 29 family.

The protein localises to the golgi apparatus. It localises to the golgi stack membrane. The catalysed reaction is a beta-D-galactoside + CMP-N-acetyl-beta-neuraminate = an N-acetyl-alpha-neuraminyl-(2-&gt;6)-beta-D-galactosyl derivative + CMP + H(+). Its function is as follows. Transfers sialic acid from the donor of substrate CMP-sialic acid to galactose containing acceptor substrates. Has alpha-2,6-sialyltransferase activity toward oligosaccharides that have the Gal-beta-1,4-GlcNAc sequence at the non-reducing end of their carbohydrate groups, but it has weak or no activities toward glycoproteins and glycolipids. In Bos taurus (Bovine), this protein is Beta-galactoside alpha-2,6-sialyltransferase 2 (ST6GAL2).